The following is a 592-amino-acid chain: Proline--tRNA ligase (592 aa).

Belongs to the class-II aminoacyl-tRNA synthetase family. ProS type 1 subfamily. Homodimer.

It localises to the cytoplasm. It carries out the reaction tRNA(Pro) + L-proline + ATP = L-prolyl-tRNA(Pro) + AMP + diphosphate. Catalyzes the attachment of proline to tRNA(Pro) in a two-step reaction: proline is first activated by ATP to form Pro-AMP and then transferred to the acceptor end of tRNA(Pro). As ProRS can inadvertently accommodate and process non-cognate amino acids such as alanine and cysteine, to avoid such errors it has two additional distinct editing activities against alanine. One activity is designated as 'pretransfer' editing and involves the tRNA(Pro)-independent hydrolysis of activated Ala-AMP. The other activity is designated 'posttransfer' editing and involves deacylation of mischarged Ala-tRNA(Pro). The misacylated Cys-tRNA(Pro) is not edited by ProRS. This chain is Proline--tRNA ligase, found in Corynebacterium urealyticum (strain ATCC 43042 / DSM 7109).